The primary structure comprises 442 residues: 3-phosphoshikimate 1-carboxyvinyltransferase (442 aa).

3-phosphoshikimate is bound by residues K25, S26, and R30. Residue K25 coordinates phosphoenolpyruvate. Phosphoenolpyruvate contacts are provided by G96 and R124. 3-phosphoshikimate contacts are provided by S171, S172, Q173, S203, D325, and K352. Residue Q173 coordinates phosphoenolpyruvate. D325 (proton acceptor) is an active-site residue. Phosphoenolpyruvate is bound by residues R356, R400, and K425.

Belongs to the EPSP synthase family. In terms of assembly, monomer.

Its subcellular location is the cytoplasm. The enzyme catalyses 3-phosphoshikimate + phosphoenolpyruvate = 5-O-(1-carboxyvinyl)-3-phosphoshikimate + phosphate. The protein operates within metabolic intermediate biosynthesis; chorismate biosynthesis; chorismate from D-erythrose 4-phosphate and phosphoenolpyruvate: step 6/7. Functionally, catalyzes the transfer of the enolpyruvyl moiety of phosphoenolpyruvate (PEP) to the 5-hydroxyl of shikimate-3-phosphate (S3P) to produce enolpyruvyl shikimate-3-phosphate and inorganic phosphate. The chain is 3-phosphoshikimate 1-carboxyvinyltransferase from Bordetella bronchiseptica (strain ATCC BAA-588 / NCTC 13252 / RB50) (Alcaligenes bronchisepticus).